Reading from the N-terminus, the 215-residue chain is Cytidylate kinase (215 aa).

10–18 (GPAAAGKST) provides a ligand contact to ATP.

The protein belongs to the cytidylate kinase family. Type 1 subfamily.

The protein localises to the cytoplasm. The enzyme catalyses CMP + ATP = CDP + ADP. It catalyses the reaction dCMP + ATP = dCDP + ADP. In Staphylococcus epidermidis (strain ATCC 35984 / DSM 28319 / BCRC 17069 / CCUG 31568 / BM 3577 / RP62A), this protein is Cytidylate kinase.